A 278-amino-acid chain; its full sequence is UPF0276 protein Shew_2240 (278 aa).

Belongs to the UPF0276 family.

In Shewanella loihica (strain ATCC BAA-1088 / PV-4), this protein is UPF0276 protein Shew_2240.